The following is a 249-amino-acid chain: Ribonuclease 3 (249 aa).

One can recognise an RNase III domain in the interval 21 to 149; that stretch reads VDHQPLIDAL…LLGAIYLAHG (129 aa). Glu-62 contacts Mg(2+). The active site involves Asp-66. Mg(2+)-binding residues include Asp-135 and Glu-138. Glu-138 is a catalytic residue. The region spanning 176–244 is the DRBM domain; it reads DWKTTLQERL…AHKAVGFLQD (69 aa).

This sequence belongs to the ribonuclease III family. In terms of assembly, homodimer. The cofactor is Mg(2+).

It is found in the cytoplasm. It catalyses the reaction Endonucleolytic cleavage to 5'-phosphomonoester.. Its function is as follows. Digests double-stranded RNA. Involved in the processing of primary rRNA transcript to yield the immediate precursors to the large and small rRNAs (23S and 16S). Processes some mRNAs, and tRNAs when they are encoded in the rRNA operon. Processes pre-crRNA and tracrRNA of type II CRISPR loci if present in the organism. The polypeptide is Ribonuclease 3 (Corynebacterium diphtheriae (strain ATCC 700971 / NCTC 13129 / Biotype gravis)).